Consider the following 294-residue polypeptide: Ribosomal RNA small subunit methyltransferase H (294 aa).

Residues 36-38 (GGH), Asp55, Phe82, Asp97, and Gln104 contribute to the S-adenosyl-L-methionine site. The disordered stretch occupies residues 265-285 (KPTVATDDEQNRNPRSRSAKW).

The protein belongs to the methyltransferase superfamily. RsmH family.

It is found in the cytoplasm. It catalyses the reaction cytidine(1402) in 16S rRNA + S-adenosyl-L-methionine = N(4)-methylcytidine(1402) in 16S rRNA + S-adenosyl-L-homocysteine + H(+). Functionally, specifically methylates the N4 position of cytidine in position 1402 (C1402) of 16S rRNA. The polypeptide is Ribosomal RNA small subunit methyltransferase H (Synechococcus sp. (strain CC9902)).